The following is a 577-amino-acid chain: F-box-like/WD repeat-containing protein TBL1X (577 aa).

The LisH domain maps to 55–87 (TSDEVNFLVYRYLQESGFSHSAFTFGIESHISQ). The region spanning 92 to 137 (GTLVPPAALISILQKGLQYVEAEISINEDGTVFDGRPIESLSLIDA) is the F-box-like domain. Residue Lys-153 is modified to N6-acetyllysine. The interval 177–202 (TTSAGVSHQNPSKNREATVNGEENRA) is disordered. At Ser-183 the chain carries Phosphoserine. 8 WD repeats span residues 230–269 (GHES…NGGS), 286–325 (PSNK…ASTL), 327–366 (QHKG…AKQQ), 369–409 (FHSA…KTFQ), 410–449 (GHTN…CIHD), 452–500 (AHNK…CTHT), 503–542 (KHQE…LVHS), and 544–576 (RGTG…LDLR). A Glycyl lysine isopeptide (Lys-Gly) (interchain with G-Cter in SUMO2) cross-link involves residue Lys-340.

It belongs to the WD repeat EBI family. As to quaternary structure, homotetramer; dimer of dimers. Component of the N-Cor repressor complex, at least composed of NCOR1, NCOR2, HDAC3, TBL1X, TBL1R, CORO2A and GPS2. Interacts with GPS2 (when sumoylated); leading to protect GPS2 against degradation by the proteasome. Component of a E3 ubiquitin ligase complex containing UBE2D1, SIAH1, CACYBP/SIP, SKP1, APC and TBL1X. Probably part of other corepressor complexes, that do not contain NCOR1 and NCOR2. Interacts with histones H2B, H3a and H4. Interacts with MECP2; recruits TBL1X to the heterochromatin foci. Interacts with USP44. Ubiquitous.

It is found in the nucleus. In terms of biological role, F-box-like protein involved in the recruitment of the ubiquitin/19S proteasome complex to nuclear receptor-regulated transcription units. Plays an essential role in transcription activation mediated by nuclear receptors. Probably acts as integral component of corepressor complexes that mediates the recruitment of the 19S proteasome complex, leading to the subsequent proteasomal degradation of transcription repressor complexes, thereby allowing cofactor exchange. In Homo sapiens (Human), this protein is F-box-like/WD repeat-containing protein TBL1X (TBL1X).